The primary structure comprises 193 residues: Putative manganese efflux pump MntP (193 aa).

6 helical membrane passes run 6–26 (LLGL…AVGI), 41–61 (YHFG…GTGI), 65–85 (TQSY…ANMI), 107–127 (LIIL…SLSM), 132–152 (IWYP…FGML), and 169–189 (VLGG…NGVF).

It belongs to the MntP (TC 9.B.29) family.

The protein localises to the cell inner membrane. In terms of biological role, probably functions as a manganese efflux pump. This is Putative manganese efflux pump MntP from Desulfotalea psychrophila (strain LSv54 / DSM 12343).